A 651-amino-acid chain; its full sequence is Acid beta-fructofuranosidase (651 aa).

Residues 1-23 (MEHHKPLLPTSSHAAPNPRTRKD) are Cytoplasmic-facing. Positions 1–103 (MEHHKPLLPT…LFSGEGGASE (103 aa)) are cleaved as a propeptide — removed in mature form. The helical; Signal-anchor for type II membrane protein transmembrane segment at 24 to 44 (LLLLLCALLFLSSLVAFGRNR) threads the bilayer. The Lumenal portion of the chain corresponds to 45–651 (ASNVPHDHVS…PFPFNPDQKN (607 aa)). A disordered region spans residues 48–76 (VPHDHVSSSASNHQQEHQSPTSLPSSKWH). Positions 54 to 72 (SSSASNHQQEHQSPTSLPS) are enriched in polar residues. Substrate is bound by residues 127 to 130 (WMND), Q146, W154, and 189 to 190 (WT). D130 is an active-site residue. The N-linked (GlcNAc...) asparagine glycan is linked to N210. A substrate-binding site is contributed by 253–254 (RD). The N-linked (GlcNAc...) asparagine glycan is linked to N275. Substrate-binding residues include E308 and D343. A disulfide bond links C500 and C548. A glycan (N-linked (GlcNAc...) asparagine) is linked at N620.

Belongs to the glycosyl hydrolase 32 family. As to quaternary structure, may be present in two forms, a 70 kDa monomer and a heterodimer of the 30 kDa and 38 kDa subunits. The ratio of the levels of the two forms within cells appears to be regulated developmentally.

It is found in the membrane. Its subcellular location is the vacuole lumen. It carries out the reaction Hydrolysis of terminal non-reducing beta-D-fructofuranoside residues in beta-D-fructofuranosides.. Its pathway is glycan biosynthesis; sucrose metabolism. The sequence is that of Acid beta-fructofuranosidase from Phaseolus vulgaris (Kidney bean).